A 199-amino-acid polypeptide reads, in one-letter code: Superoxide dismutase [Fe] (199 aa).

Residues histidine 28, histidine 80, aspartate 162, and histidine 166 each coordinate Fe cation.

This sequence belongs to the iron/manganese superoxide dismutase family. As to quaternary structure, homodimer. Requires Fe cation as cofactor.

The protein localises to the cytoplasm. It carries out the reaction 2 superoxide + 2 H(+) = H2O2 + O2. In terms of biological role, destroys superoxide anion radicals which are normally produced within the cells and which are toxic to biological systems. The polypeptide is Superoxide dismutase [Fe] (sodB) (Leptolyngbya boryana (Plectonema boryanum)).